The following is a 1935-amino-acid chain: MGDGEMECFGPAAVYLRKTERERIEAQNTPFDAKTAFFVVDPDEMYLKGTLVSKEGGKATVKTHSGKTVTVKEDEIFPMNPPKFDKIEDMAMMTHLNEPAVLFNLKERYAAWMIYTYSGLFCVTVNPYKWLPVYDAVVVGGYRGKKRIEAPPHIFSISDNAYQFMLTDRENQSVLITGESGAGKTVNTKRVIQYFATVGAMSGPKKPEPVPGKMQGSLEDQIVAANPLLEAYGNAKTVRNDNSSRFGKFIRIHFGTTGKLASADIETYLLEKSRVTFQLSAERSYHIFYQLMTGHKPELLEALLITTNPYDYPMISQGEITVKSINDVEEFIATDTAIDILGFTADEKISIYKLTGAVMHHGNMKFKQKQREEQAEPDGTEVADKIAYLMGLNSADMLKALCFPRVKVGNEMVTKGQTVPQVNNAVSALSKSVYEKMFLWMVIRINEMLDTKQPRQFFIGVLDIAGFEIFDFNSLEQLCINFTNEKLQQFFNHHMFVLEQEEYKKEGIEWEFIDFGMDLAACIELIEKPMGIFSILEEECMFPKATDTSFKNKLHDQHLGKTAAFQKPKPAKGKAEAHFSLVHYAGTVDYNIVGWLDKNKDPLNDSVVQLYQKSSLKVLAFLYATHGAEAEGGGGKKGKKKGGSFQTVSALFRENLGKLMTNLRSTHPHFVRCLIPNESKTPGLMENYLVIHQLRCNGVLEGIRICRKGFPSRILYGDFKQRYKVLNASVIPEGQFIDNKKASEKLLGSIDVDHTQYKFGHTKVFFKAGLLGALEEMRDEKLALLVTMTQALCRGYVMRKEFVKMMERRESIYSIQYNIRSFMNVKHWPWMKLYFKIKPLLKSAETEKEMAAMKENYEKMKEDLTKALAKKKELEEKMVSLLQEKNDLQLQVTAESENLSDAEERCEGLIKSKIQLEAKLKETNERLEDEEEINAELTAKKRKLEDECSELKKDIDDLELTLAKVEKEKHATENKVKNLTEEMASQDESIAKLTKEKKALQEAHQQTLDDLQAEEDKVNTLTKAKTKLEQQVDDLEGSLEQEKKLRMDLERAKRKLEGDLKLAQESIMDLENEKQQSDEKIKKKDFEISQLLSKIEDEQSLGAQLQKKIKELQARIEELEEEIEAERAARAKVEKQRADLSRELEEISERLEEAGGATAAQIEMNKKREAEFQKMRRDLEESTLQHEATAAALRKEQADSVAELGEQIDNLQRVKQKLEKEKSEYKMEIDDLTSNMEAVAKAKANLEKMCRTLEDQLSEIKTKSDENVRQLNDMNAQRARLQTENGEFSRQLEEKEALVSQLTRGKQAYTQQIEELKRHIEEEVKAKNALAHAVQSARHDCDLLREQYEEEQEAKAELQRGMSKANSEVAQWRTKYETDAIQRTEELEEAKKKLAQRLQDAEESIEAVNSKCASLEKTKQRLQGEVEDLMIDVERANSLAANLDKKQRNFDKVLAEWKQKYEESQAELEGAQKEARSLSTELFKMKNSYEEALDHLETLKRENKNLQQEISDLTEQLGETGKSIHELEKAKKTVESEKSEIQTALEEAEGTLEHEESKILRVQLELNQVKSEIDRKLAEKDEEMEQIKRNSQRVIDSMQSTLDSEVRSRNDALRVKKKMEGDLNEMEIQLSHANRQAAEAQKQLRNVQGQLKDAQLHLDEAVRGQEDMKEQVAMVERRNSLMQAEIEELRAALEQTERGRKVAEQELVDASERVGLLHSQNTSLINTKKKLEADLVQVQGEVDDAVQEARNAEEKAKKAITDAAMMAEELKKEQDTSAHLERMKKNLEVTVKDLQHRLDEAESLAMKGGKKQLQKLESRVRELEAEVEAEQRRGADAVKGVRKYERRVKELTYQTEEDKKNVIRLQDLVDKLQLKVKVYKRQAEEAEEQTNTHLSRYRKVQHELEEAQERADVAESQVNKLRAKSRDAGKSKDEE.

Positions 32–81 (DAKTAFFVVDPDEMYLKGTLVSKEGGKATVKTHSGKTVTVKEDEIFPMNP) constitute a Myosin N-terminal SH3-like domain. A Myosin motor domain is found at 85–779 (DKIEDMAMMT…LLGALEEMRD (695 aa)). Residue Lys-129 is modified to N6,N6,N6-trimethyllysine. 178–185 (GESGAGKT) is a binding site for ATP. Actin-binding stretches follow at residues 659–681 (LMTNLRSTHPHFVRCLIPNESKT) and 761–775 (HTKVFFKAGLLGALE). In terms of domain architecture, IQ spans 782-811 (LALLVTMTQALCRGYVMRKEFVKMMERRES). Residues 812–839 (IYSIQYNIRSFMNVKHWPWMKLYFKIKP) form a hinge region. Residues 840–1935 (LLKSAETEKE…RDAGKSKDEE (1096 aa)) are a coiled coil. Disordered regions lie at residues 1589–1608 (RNSQRVIDSMQSTLDSEVRS) and 1902–1935 (HELEEAQERADVAESQVNKLRAKSRDAGKSKDEE). Over residues 1592-1603 (QRVIDSMQSTLD) the composition is skewed to polar residues. Composition is skewed to basic and acidic residues over residues 1902 to 1913 (HELEEAQERADV) and 1924 to 1935 (KSRDAGKSKDEE).

It belongs to the TRAFAC class myosin-kinesin ATPase superfamily. Myosin family. In terms of assembly, muscle myosin is a hexameric protein that consists of 2 heavy chain subunits (MHC), 2 alkali light chain subunits (MLC) and 2 regulatory light chain subunits (MLC-2).

The protein resides in the cytoplasm. The protein localises to the myofibril. Functionally, muscle contraction. This Cyprinus carpio (Common carp) protein is Myosin heavy chain, fast skeletal muscle.